Consider the following 729-residue polypeptide: Carbon monoxide dehydrogenase/acetyl-CoA synthase subunit alpha (729 aa).

Residues Cys-506, Cys-509, Cys-518, and Cys-528 each contribute to the [4Fe-4S] cluster site. Cys-509 is a Ni(2+) binding site. Residues Cys-595, Gly-596, and Cys-597 each contribute to the Ni(2+) site.

In terms of assembly, tetramer of two alpha and two beta chains. Ni cation is required as a cofactor. The cofactor is [4Fe-4S] cluster.

It carries out the reaction Co(I)-[corrinoid Fe-S protein] + acetyl-CoA + H(+) = methyl-Co(III)-[corrinoid Fe-S protein] + CO + CoA. In terms of biological role, the beta subunit generates CO from CO(2), while the alpha subunit (this protein) combines the CO with CoA and a methyl group to form acetyl-CoA. The methyl group, which is incorporated into acetyl-CoA, is transferred to the alpha subunit by a corrinoid iron-sulfur protein. This chain is Carbon monoxide dehydrogenase/acetyl-CoA synthase subunit alpha, found in Moorella thermoacetica (Clostridium thermoaceticum).